We begin with the raw amino-acid sequence, 176 residues long: Peptide deformylase (176 aa).

Residues C94 and H136 each coordinate Fe cation. E137 is an active-site residue. H140 contacts Fe cation.

This sequence belongs to the polypeptide deformylase family. Fe(2+) serves as cofactor.

It carries out the reaction N-terminal N-formyl-L-methionyl-[peptide] + H2O = N-terminal L-methionyl-[peptide] + formate. Its function is as follows. Removes the formyl group from the N-terminal Met of newly synthesized proteins. Requires at least a dipeptide for an efficient rate of reaction. N-terminal L-methionine is a prerequisite for activity but the enzyme has broad specificity at other positions. This chain is Peptide deformylase, found in Mesorhizobium japonicum (strain LMG 29417 / CECT 9101 / MAFF 303099) (Mesorhizobium loti (strain MAFF 303099)).